The chain runs to 358 residues: S-adenosylmethionine:tRNA ribosyltransferase-isomerase (358 aa).

It belongs to the QueA family. Monomer.

The protein localises to the cytoplasm. The enzyme catalyses 7-aminomethyl-7-carbaguanosine(34) in tRNA + S-adenosyl-L-methionine = epoxyqueuosine(34) in tRNA + adenine + L-methionine + 2 H(+). The protein operates within tRNA modification; tRNA-queuosine biosynthesis. Its function is as follows. Transfers and isomerizes the ribose moiety from AdoMet to the 7-aminomethyl group of 7-deazaguanine (preQ1-tRNA) to give epoxyqueuosine (oQ-tRNA). This chain is S-adenosylmethionine:tRNA ribosyltransferase-isomerase, found in Desulfotalea psychrophila (strain LSv54 / DSM 12343).